Reading from the N-terminus, the 304-residue chain is Nod factor export ATP-binding protein I (304 aa).

One can recognise an ABC transporter domain in the interval 6–236 (IDFQQVEKRY…EIGCDVIEIY (231 aa)). Residue 38-45 (GPNGAGKT) coordinates ATP.

Belongs to the ABC transporter superfamily. Lipooligosaccharide exporter (TC 3.A.1.102) family. As to quaternary structure, the complex is composed of two ATP-binding proteins (NodI) and two transmembrane proteins (NodJ).

It is found in the cell inner membrane. In terms of biological role, part of the ABC transporter complex NodIJ involved in the export of the nodulation factors (Nod factors), the bacterial signal molecules that induce symbiosis and subsequent nodulation induction. Nod factors are LCO (lipo-chitin oligosaccharide), a modified beta-1,4-linked N-acetylglucosamine oligosaccharide. This subunit is responsible for energy coupling to the transport system. The protein is Nod factor export ATP-binding protein I of Burkholderia pseudomallei (strain K96243).